A 220-amino-acid polypeptide reads, in one-letter code: Peptide methionine sulfoxide reductase MsrA (220 aa).

The active site involves cysteine 54.

This sequence belongs to the MsrA Met sulfoxide reductase family.

The catalysed reaction is L-methionyl-[protein] + [thioredoxin]-disulfide + H2O = L-methionyl-(S)-S-oxide-[protein] + [thioredoxin]-dithiol. It carries out the reaction [thioredoxin]-disulfide + L-methionine + H2O = L-methionine (S)-S-oxide + [thioredoxin]-dithiol. Functionally, has an important function as a repair enzyme for proteins that have been inactivated by oxidation. Catalyzes the reversible oxidation-reduction of methionine sulfoxide in proteins to methionine. This is Peptide methionine sulfoxide reductase MsrA from Salinispora tropica (strain ATCC BAA-916 / DSM 44818 / JCM 13857 / NBRC 105044 / CNB-440).